Consider the following 193-residue polypeptide: Anthranilate synthase component 2 (193 aa).

Residues 3-193 (DILLLDNVDS…EQTLAWALAK (191 aa)) enclose the Glutamine amidotransferase type-1 domain. 57–59 (GPG) serves as a coordination point for L-glutamine. Cys84 (nucleophile; for GATase activity) is an active-site residue. L-glutamine contacts are provided by residues Gln88 and 134 to 135 (SL). Residues His170 and Glu172 each act as for GATase activity in the active site.

Heterotetramer consisting of two non-identical subunits: a beta subunit (TrpG) and a large alpha subunit (TrpE).

The catalysed reaction is chorismate + L-glutamine = anthranilate + pyruvate + L-glutamate + H(+). It functions in the pathway amino-acid biosynthesis; L-tryptophan biosynthesis; L-tryptophan from chorismate: step 1/5. In terms of biological role, part of a heterotetrameric complex that catalyzes the two-step biosynthesis of anthranilate, an intermediate in the biosynthesis of L-tryptophan. In the first step, the glutamine-binding beta subunit (TrpG) of anthranilate synthase (AS) provides the glutamine amidotransferase activity which generates ammonia as a substrate that, along with chorismate, is used in the second step, catalyzed by the large alpha subunit of AS (TrpE) to produce anthranilate. In the absence of TrpG, TrpE can synthesize anthranilate directly from chorismate and high concentrations of ammonia. The sequence is that of Anthranilate synthase component 2 (trpG) from Serratia marcescens.